A 182-amino-acid chain; its full sequence is Adenine phosphoribosyltransferase (182 aa).

The protein belongs to the purine/pyrimidine phosphoribosyltransferase family. Homodimer.

Its subcellular location is the cytoplasm. The enzyme catalyses AMP + diphosphate = 5-phospho-alpha-D-ribose 1-diphosphate + adenine. It participates in purine metabolism; AMP biosynthesis via salvage pathway; AMP from adenine: step 1/1. Functionally, catalyzes a salvage reaction resulting in the formation of AMP, that is energically less costly than de novo synthesis. This chain is Adenine phosphoribosyltransferase, found in Pseudomonas syringae pv. tomato (strain ATCC BAA-871 / DC3000).